The chain runs to 354 residues: Protein RecA (354 aa).

ATP is bound at residue 67-74 (GPESSGKT). Positions 331–354 (GGANSSDSKTESDENIDLETGEVF) are disordered. The segment covering 343–354 (DENIDLETGEVF) has biased composition (acidic residues).

This sequence belongs to the RecA family.

Its subcellular location is the cytoplasm. In terms of biological role, can catalyze the hydrolysis of ATP in the presence of single-stranded DNA, the ATP-dependent uptake of single-stranded DNA by duplex DNA, and the ATP-dependent hybridization of homologous single-stranded DNAs. It interacts with LexA causing its activation and leading to its autocatalytic cleavage. This chain is Protein RecA, found in Shewanella frigidimarina (strain NCIMB 400).